Consider the following 729-residue polypeptide: Sodium-dependent neutral amino acid transporter B(0)AT2 (729 aa).

At 1 to 69 (MPKNSKVVKR…ERPAWNSKLQ (69 aa)) the chain is on the cytoplasmic side. A phosphoserine mark is found at Ser-25 and Ser-55. A run of 3 helical transmembrane segments spans residues 70–90 (YILAQVGFSVGLGNVWRFPYL), 98–117 (AYLLPYLILLLVIGIPLFFL), and 142–162 (GIGFASCVVCYFVALYYNVII). At 163–225 (GWTLFYFSQS…SSISESGGLN (63 aa)) the chain is on the extracellular side. A glycan (N-linked (GlcNAc...) asparagine) is linked at Asn-187. Transmembrane regions (helical) follow at residues 226–244 (WKMTGCLLAAWVMVCLAMI), 253–270 (IMYFSSLFPYVVLICFLI), 306–323 (VFFALGLGFGGVIAFSSY), and 335–356 (VLVSFINFFTSVLATLVVFAVL). The Extracellular portion of the chain corresponds to 357–452 (GFKANIVNEK…FIAFTEAMTH (96 aa)). 2 N-linked (GlcNAc...) asparagine glycosylation sites follow: Asn-383 and Asn-394. 5 helical membrane passes run 453-472 (FPASPFWSVMFFLMLINLGL), 496-514 (ILTVICCLLAFCIGLMFVQ), 530-550 (TLPLLIVVILENIAVSFVYGI), 571-592 (YMWKYISPLMLVTLLIASIVNM), and 620-642 (VVCFSLMVLAILPVPVVFVIRRC). Residues 643–729 (NLIDDSSGNL…DMPDMPESDL (87 aa)) lie on the Cytoplasmic side of the membrane. 3 positions are modified to phosphoserine: Ser-687, Ser-699, and Ser-701.

Belongs to the sodium:neurotransmitter symporter (SNF) (TC 2.A.22) family. SLC6A15 subfamily. As to expression, widely distributed in the central nervous system, including the olfactory bulb, the hypothalamus, the cerebral cortex, the hippocampus, and the cerebellum. In addition, intense expression is found in the motor nuclei including the oculomotor nucleus, abducens nucleus, trigeminal motor nucleus, facial nucleus, hypoglossal nucleus and ventral horn of spinal cord. Intense hybridization signals are also observed in the nuclei containing monoaminergic neurons, such as locus coeruleus, the substantia nigra pars compacta, the ventral tegmental area, the dorsal raphe nucleus and the median raphe nucleus.

It is found in the membrane. It carries out the reaction L-leucine(in) + Na(+)(in) = L-leucine(out) + Na(+)(out). The catalysed reaction is L-isoleucine(in) + Na(+)(in) = L-isoleucine(out) + Na(+)(out). The enzyme catalyses L-methionine(in) + Na(+)(in) = L-methionine(out) + Na(+)(out). It catalyses the reaction L-proline(in) + Na(+)(in) = L-proline(out) + Na(+)(out). It carries out the reaction L-alanine(in) + Na(+)(in) = L-alanine(out) + Na(+)(out). The catalysed reaction is L-asparagine(in) + Na(+)(in) = L-asparagine(out) + Na(+)(out). The enzyme catalyses L-valine(in) + Na(+)(in) = L-valine(out) + Na(+)(out). It catalyses the reaction L-cysteine(in) + Na(+)(in) = L-cysteine(out) + Na(+)(out). It carries out the reaction L-glutamine(in) + Na(+)(in) = L-glutamine(out) + Na(+)(out). The catalysed reaction is L-serine(in) + Na(+)(in) = L-serine(out) + Na(+)(out). The enzyme catalyses L-threonine(in) + Na(+)(in) = L-threonine(out) + Na(+)(out). It catalyses the reaction L-pipecolate(in) + Na(+)(in) = L-pipecolate(out) + Na(+)(out). It carries out the reaction L-phenylalanine(in) + Na(+)(in) = L-phenylalanine(out) + Na(+)(out). Functionally, functions as a sodium-dependent neutral amino acid transporter. Exhibits preference for the branched-chain amino acids, particularly leucine, valine and isoleucine and methionine. Can also transport low-affinity substrates such as alanine, phenylalanine, glutamine and pipecolic acid. Mediates the saturable, pH-sensitive and electrogenic cotransport of proline and sodium ions with a stoichiometry of 1:1. May have a role as transporter for neurotransmitter precursors into neurons. In contrast to other members of the neurotransmitter transporter family, does not appear to be chloride-dependent. This is Sodium-dependent neutral amino acid transporter B(0)AT2 (Slc6a15) from Rattus norvegicus (Rat).